The sequence spans 464 residues: Phosphoenolpyruvate carboxylase (464 aa).

Belongs to the PEPCase type 2 family. In terms of assembly, homotetramer. Requires Mg(2+) as cofactor.

It carries out the reaction oxaloacetate + phosphate = phosphoenolpyruvate + hydrogencarbonate. Functionally, catalyzes the irreversible beta-carboxylation of phosphoenolpyruvate (PEP) to form oxaloacetate (OAA), a four-carbon dicarboxylic acid source for the tricarboxylic acid cycle. This Thermofilum pendens (strain DSM 2475 / Hrk 5) protein is Phosphoenolpyruvate carboxylase.